A 119-amino-acid chain; its full sequence is MAGLATFVVSLLLVTLCAHCIDPAGSVSIPSSCCMFFISKKVPENRVVTYQLLNGSVCPKAGVVFTTKKNQKFCGDPQLHWVQKLMKNIEARRKKVSPGVRAMSTKALVQRYPANSTSI.

A signal peptide spans 1-26 (MAGLATFVVSLLLVTLCAHCIDPAGS). 2 disulfides stabilise this stretch: cysteine 33-cysteine 58 and cysteine 34-cysteine 74. N-linked (GlcNAc...) asparagine glycans are attached at residues asparagine 54 and asparagine 115.

The protein belongs to the intercrine beta (chemokine CC) family.

The protein localises to the secreted. Functionally, chemotactic for resting T-lymphocytes, and eosinophils. Has lower chemotactic activity for neutrophils but none for monocytes and activated lymphocytes. Is a strong suppressor of colony formation by a multipotential hematopoietic progenitor cell line. Binds to CCR3. The polypeptide is C-C motif chemokine 24 (Canis lupus familiaris (Dog)).